We begin with the raw amino-acid sequence, 266 residues long: Hydroxyethylthiazole kinase (266 aa).

Met41 contacts substrate. ATP is bound by residues Arg117 and Ser163. Ala190 lines the substrate pocket.

It belongs to the Thz kinase family. Mg(2+) is required as a cofactor.

The catalysed reaction is 5-(2-hydroxyethyl)-4-methylthiazole + ATP = 4-methyl-5-(2-phosphooxyethyl)-thiazole + ADP + H(+). The protein operates within cofactor biosynthesis; thiamine diphosphate biosynthesis; 4-methyl-5-(2-phosphoethyl)-thiazole from 5-(2-hydroxyethyl)-4-methylthiazole: step 1/1. Functionally, catalyzes the phosphorylation of the hydroxyl group of 4-methyl-5-beta-hydroxyethylthiazole (THZ). The sequence is that of Hydroxyethylthiazole kinase from Histophilus somni (strain 129Pt) (Haemophilus somnus).